The chain runs to 265 residues: Cell division protein DivIB (265 aa).

The Cytoplasmic segment spans residues 1–30 (MKNSKVIKLQDRVPKLKNQQKKKKKNVNHR). A helical transmembrane segment spans residues 31–51 (LILYISILFLLVLFLIYFRSP). The Extracellular portion of the chain corresponds to 52 to 265 (LSNIKKISVF…NRMIVFNTLS (214 aa)). The region spanning 53–121 (SNIKKISVFG…NKIDVHIEEY (69 aa)) is the POTRA domain.

Belongs to the FtsQ/DivIB family. DivIB subfamily.

The protein localises to the cell membrane. Functionally, cell division protein that may be involved in stabilizing or promoting the assembly of the division complex. This chain is Cell division protein DivIB, found in Bacillus anthracis.